Consider the following 169-residue polypeptide: uncharacterized protein (169 aa).

The protein resides in the mitochondrion. This is an uncharacterized protein from Marchantia polymorpha (Common liverwort).